We begin with the raw amino-acid sequence, 91 residues long: Non-specific lipid-transfer protein P3 (91 aa).

Intrachain disulfides connect Cys-3-Cys-50, Cys-13-Cys-27, Cys-28-Cys-73, and Cys-48-Cys-87.

The protein resides in the secreted. Plant non-specific lipid-transfer proteins transfer phospholipids as well as galactolipids across membranes. May play a role in wax or cutin deposition in the cell walls of expanding epidermal cells and certain secretory tissues. This is Non-specific lipid-transfer protein P3 from Vitis sp. (Grape).